Consider the following 1081-residue polypeptide: Teashirt homolog 3 (1081 aa).

2 disordered regions span residues 141-161 and 238-257; these read PSSE…SSCG and HYRD…WSKP. The span at 148–161 shows a compositional bias: low complexity; the sequence is GSSSSSSSSSSSCG. C2H2-type zinc fingers lie at residues 214-238 and 275-299; these read FRCK…ETGH and LKCM…KTKH. Residues 238-247 are compositionally biased toward basic and acidic residues; that stretch reads HYRDDNHETD. The disordered stretch occupies residues 325–364; the sequence is SLELELPSSPDSTGGTPKATISDTNDALQKNSNPYITPNN. Polar residues predominate over residues 335-364; it reads DSTGGTPKATISDTNDALQKNSNPYITPNN. A C2H2-type 3; atypical zinc finger spans residues 386-404; it reads LKCMECGSSHDTLQELTAH. Over residues 473–491 the composition is skewed to basic and acidic residues; the sequence is EVDKEKAVTDEKPKQKDKP. 4 disordered regions span residues 473-502, 579-604, 626-687, and 855-897; these read EVDK…DISS, NSEI…PMPK, EKMK…LAEP, and TESH…RQSN. The span at 581 to 603 shows a compositional bias: polar residues; sequence EIVSPTKNQTLVSPPSSQTSPMP. Residues 606 to 630 adopt a coiled-coil conformation; sequence NFHAMEELVKKVTEKVAKVEEKMKE. At serine 682 the chain carries Phosphoserine. Over residues 856–869 the composition is skewed to low complexity; that stretch reads ESHTSKSSTPSSIS. Residues 891–961 constitute a DNA-binding region (homeobox; atypical); that stretch reads RKGRQSNWNP…NVKYQLRRTG (71 aa). 2 C2H2-type zinc fingers span residues 976-998 and 1041-1064; these read FFCN…LESH and YQCK…SKTH.

This sequence belongs to the teashirt C2H2-type zinc-finger protein family. As to quaternary structure, interacts (via homeobox domain) with APBB1 (via PID domain 1). Interacts (via N-terminus) with HDAC1 and HDAC2; the interaction is direct. Found in a trimeric complex with APBB1 and HDAC1; the interaction between HDAC1 and APBB1 is mediated by TSHZ3. In terms of tissue distribution, expressed in brain; strongly reduced in post-mortem elderly subjects with Alzheimer disease. Expressed in the fetal neocortex.

It localises to the nucleus. Its subcellular location is the cell projection. The protein localises to the growth cone. Functionally, transcriptional regulator involved in developmental processes. Functions in association with APBB1, SET and HDAC factors as a transcriptional repressor, that inhibits the expression of CASP4. TSHZ3-mediated transcription repression involves the recruitment of histone deacetylases HDAC1 and HDAC2. Associates with chromatin in a region surrounding the CASP4 transcriptional start site(s). Regulates the development of neurons involved in both respiratory rhythm and airflow control. Promotes maintenance of nucleus ambiguus (nA) motoneurons, which govern upper airway function, and establishes a respiratory rhythm generator (RRG) activity compatible with survival at birth. Involved in the differentiation of the proximal uretic smooth muscle cells during developmental processes. Involved in the up-regulation of myocardin, that directs the expression of smooth muscle cells in the proximal ureter. Involved in the modulation of glutamatergic synaptic transmission and long-term synaptic potentiation. The sequence is that of Teashirt homolog 3 (TSHZ3) from Homo sapiens (Human).